The following is a 293-amino-acid chain: Formamidopyrimidine-DNA glycosylase (293 aa).

P2 serves as the catalytic Schiff-base intermediate with DNA. E3 serves as the catalytic Proton donor. The Proton donor; for beta-elimination activity role is filled by K61. DNA contacts are provided by H104, R123, and K169. An FPG-type zinc finger spans residues 255–289; the sequence is DAYGREGEPCRRCGAIMRRDKFMNRSSFYCPRCQP. R279 functions as the Proton donor; for delta-elimination activity in the catalytic mechanism.

The protein belongs to the FPG family. As to quaternary structure, monomer. Requires Zn(2+) as cofactor.

The catalysed reaction is Hydrolysis of DNA containing ring-opened 7-methylguanine residues, releasing 2,6-diamino-4-hydroxy-5-(N-methyl)formamidopyrimidine.. It catalyses the reaction 2'-deoxyribonucleotide-(2'-deoxyribose 5'-phosphate)-2'-deoxyribonucleotide-DNA = a 3'-end 2'-deoxyribonucleotide-(2,3-dehydro-2,3-deoxyribose 5'-phosphate)-DNA + a 5'-end 5'-phospho-2'-deoxyribonucleoside-DNA + H(+). Its function is as follows. Involved in base excision repair of DNA damaged by oxidation or by mutagenic agents. Acts as a DNA glycosylase that recognizes and removes damaged bases. Has a preference for oxidized purines, such as 7,8-dihydro-8-oxoguanine (8-oxoG). Has AP (apurinic/apyrimidinic) lyase activity and introduces nicks in the DNA strand. Cleaves the DNA backbone by beta-delta elimination to generate a single-strand break at the site of the removed base with both 3'- and 5'-phosphates. This Mycolicibacterium vanbaalenii (strain DSM 7251 / JCM 13017 / BCRC 16820 / KCTC 9966 / NRRL B-24157 / PYR-1) (Mycobacterium vanbaalenii) protein is Formamidopyrimidine-DNA glycosylase.